Reading from the N-terminus, the 435-residue chain is Enolase (435 aa).

(2R)-2-phosphoglycerate is bound at residue Gln167. Glu209 serves as the catalytic Proton donor. Mg(2+) is bound by residues Asp246, Glu291, and Asp318. (2R)-2-phosphoglycerate contacts are provided by Lys343, Arg372, Ser373, and Lys394. Lys343 serves as the catalytic Proton acceptor.

Belongs to the enolase family. In terms of assembly, component of the RNA degradosome, a multiprotein complex involved in RNA processing and mRNA degradation. Mg(2+) is required as a cofactor.

The protein resides in the cytoplasm. It localises to the secreted. The protein localises to the cell surface. It carries out the reaction (2R)-2-phosphoglycerate = phosphoenolpyruvate + H2O. It functions in the pathway carbohydrate degradation; glycolysis; pyruvate from D-glyceraldehyde 3-phosphate: step 4/5. Its function is as follows. Catalyzes the reversible conversion of 2-phosphoglycerate (2-PG) into phosphoenolpyruvate (PEP). It is essential for the degradation of carbohydrates via glycolysis. The sequence is that of Enolase from Psychromonas ingrahamii (strain DSM 17664 / CCUG 51855 / 37).